Consider the following 864-residue polypeptide: DNA mismatch repair protein MutS (864 aa).

Residue 621 to 628 (GPNMGGKS) participates in ATP binding. The disordered stretch occupies residues 804-833 (ETGKPESPAPVASRSSKPSMQADMFAEPQP).

It belongs to the DNA mismatch repair MutS family.

Functionally, this protein is involved in the repair of mismatches in DNA. It is possible that it carries out the mismatch recognition step. This protein has a weak ATPase activity. The polypeptide is DNA mismatch repair protein MutS (Teredinibacter turnerae (strain ATCC 39867 / T7901)).